The primary structure comprises 329 residues: Isopentenyl-diphosphate delta-isomerase (329 aa).

4-5 contributes to the substrate binding site; sequence RK. FMN contacts are provided by residues 59–61, S89, and N116; that span reads AMT. Q146 contributes to the substrate binding site. E147 lines the Mg(2+) pocket. FMN-binding positions include K178, S203, T208, 252–254, and 273–274; these read GVR and SR.

It belongs to the IPP isomerase type 2 family. As to quaternary structure, homooctamer. Dimer of tetramers. FMN is required as a cofactor. The cofactor is NADPH. Mg(2+) serves as cofactor.

It is found in the cytoplasm. It catalyses the reaction isopentenyl diphosphate = dimethylallyl diphosphate. Its function is as follows. Involved in the biosynthesis of isoprenoids. Catalyzes the 1,3-allylic rearrangement of the homoallylic substrate isopentenyl (IPP) to its allylic isomer, dimethylallyl diphosphate (DMAPP). The protein is Isopentenyl-diphosphate delta-isomerase of Streptococcus pyogenes serotype M28 (strain MGAS6180).